The chain runs to 506 residues: NAD(P)H-quinone oxidoreductase subunit 2, chloroplastic (506 aa).

13 helical membrane-spanning segments follow: residues 15–35 (LIPE…DLVY), 39–59 (CHAW…VLLG), 84–104 (LSLV…LLSI), 113–133 (APSE…LVAG), 137–157 (LLMM…LTGY), 172–192 (LLVG…MYGI), 217–237 (CALA…AAPF), 249–269 (PTPV…ILAV), 283–303 (WHLI…FIAV), 339–359 (IVYL…VILF), 382–402 (ALCL…AGFF), 418–438 (SLVW…LSVV), and 471–491 (VGIF…NSMV).

It belongs to the complex I subunit 2 family. NDH is composed of at least 16 different subunits, 5 of which are encoded in the nucleus.

Its subcellular location is the plastid. It localises to the chloroplast thylakoid membrane. It catalyses the reaction a plastoquinone + NADH + (n+1) H(+)(in) = a plastoquinol + NAD(+) + n H(+)(out). It carries out the reaction a plastoquinone + NADPH + (n+1) H(+)(in) = a plastoquinol + NADP(+) + n H(+)(out). Functionally, NDH shuttles electrons from NAD(P)H:plastoquinone, via FMN and iron-sulfur (Fe-S) centers, to quinones in the photosynthetic chain and possibly in a chloroplast respiratory chain. The immediate electron acceptor for the enzyme in this species is believed to be plastoquinone. Couples the redox reaction to proton translocation, and thus conserves the redox energy in a proton gradient. This chain is NAD(P)H-quinone oxidoreductase subunit 2, chloroplastic, found in Nephroselmis olivacea (Green alga).